The primary structure comprises 93 residues: Large ribosomal subunit protein bL36m (93 aa).

A mitochondrion-targeting transit peptide spans 1 to 35 (MFLQTLRLTMPRMFLHMKPSPITITRACTVPSLLS).

The protein belongs to the bacterial ribosomal protein bL36 family. In terms of assembly, component of the mitochondrial large ribosomal subunit (mt-LSU). Mature yeast 74S mitochondrial ribosomes consist of a small (37S) and a large (54S) subunit. The 37S small subunit contains a 15S ribosomal RNA (15S mt-rRNA) and 34 different proteins. The 54S large subunit contains a 21S rRNA (21S mt-rRNA) and 46 different proteins. bL36m has a zinc binding site.

It localises to the mitochondrion. In terms of biological role, component of the mitochondrial ribosome (mitoribosome), a dedicated translation machinery responsible for the synthesis of mitochondrial genome-encoded proteins, including at least some of the essential transmembrane subunits of the mitochondrial respiratory chain. The mitoribosomes are attached to the mitochondrial inner membrane and translation products are cotranslationally integrated into the membrane. bL36m may be involved in a process influencing telomere capping. The polypeptide is Large ribosomal subunit protein bL36m (RTC6) (Saccharomyces cerevisiae (strain ATCC 204508 / S288c) (Baker's yeast)).